Consider the following 235-residue polypeptide: MSKQLIYSGKAKDIYTTEDENLIISTYKDQATAFNGVKKEQIAGKGVLNNQISSFIFEKLNVAGVATHFVEKLSDTEQLNKKVKIIPLEVVLRNYTAGSFSKRFGVDEGIALETPIVEFYYKNDDLDDPFINDEHVKFLQIAGDQQIAYLKEETRRINELLKVWFAEIGLKLIDFKLEFGFDKDGKIILADEFSPDNCRLWDADGNHMDKDVFRRGLGELTDVYEIVWEKLQELK.

It belongs to the SAICAR synthetase family.

It carries out the reaction 5-amino-1-(5-phospho-D-ribosyl)imidazole-4-carboxylate + L-aspartate + ATP = (2S)-2-[5-amino-1-(5-phospho-beta-D-ribosyl)imidazole-4-carboxamido]succinate + ADP + phosphate + 2 H(+). It functions in the pathway purine metabolism; IMP biosynthesis via de novo pathway; 5-amino-1-(5-phospho-D-ribosyl)imidazole-4-carboxamide from 5-amino-1-(5-phospho-D-ribosyl)imidazole-4-carboxylate: step 1/2. The protein is Phosphoribosylaminoimidazole-succinocarboxamide synthase (purC) of Streptococcus pneumoniae serotype 4 (strain ATCC BAA-334 / TIGR4).